Reading from the N-terminus, the 72-residue chain is MAGKKKLLAELREKSTDELDAFIHENKKALFSLRAEVGLQNKAVKTHLFSMYKKNIARSMTVKQEKEGKIDG.

This sequence belongs to the universal ribosomal protein uL29 family.

This Chlamydia felis (strain Fe/C-56) (Chlamydophila felis) protein is Large ribosomal subunit protein uL29.